The chain runs to 165 residues: Lipoprotein signal peptidase (165 aa).

A run of 3 helical transmembrane segments spans residues 12-32 (WLWL…LILQ), 70-90 (WFFA…MYRA), and 102-122 (ALII…GFVV). Catalysis depends on residues D123 and D141. A helical membrane pass occupies residues 137-157 (FNLADTAICIGAALVVLEGFL).

The protein belongs to the peptidase A8 family.

It is found in the cell inner membrane. The catalysed reaction is Release of signal peptides from bacterial membrane prolipoproteins. Hydrolyzes -Xaa-Yaa-Zaa-|-(S,diacylglyceryl)Cys-, in which Xaa is hydrophobic (preferably Leu), and Yaa (Ala or Ser) and Zaa (Gly or Ala) have small, neutral side chains.. It participates in protein modification; lipoprotein biosynthesis (signal peptide cleavage). In terms of biological role, this protein specifically catalyzes the removal of signal peptides from prolipoproteins. This Cronobacter sakazakii (strain ATCC BAA-894) (Enterobacter sakazakii) protein is Lipoprotein signal peptidase.